Here is a 1150-residue protein sequence, read N- to C-terminus: MAPPLRPLARLRPPGMLLRALLLLLLLSPLPGVWCFSELSFVKEPQDVTVTRKDPVVLDCQAHGEVPIKVTWLKNGAKMSENKRIEVLSNGSLYISEVEGRRGEQSDEGFYQCLAMNKYGAILSQKAHLALSTISAFEVQPISTEVHEGGVARFACKISSHPPAVITWEFNRTTLPMTMDRITALPTGVLQIYDVSQRDSGNYRCIAATVAHRRKSMEASLTVIPAKESKSFHTPTIIAGPQNITTSLHQTVVLECMATGNPKPIISWSRLDHKSIDVFNTRVLGNGNLMISDVRLQHAGVYVCRATTPGTRNFTVAMATLTVLAPPSFVEWPESLTRPRAGTARFVCQAEGIPSPKMSWLKNGRKIHSNGRIKMYNSKLVINQIIPEDDAIYQCMAENSQGSILSRARLTVVMSEDRPSAPYNVHAETMSSSAILLAWERPLYNSDKVIAYSVHYMKAEGLNNEEYQVVIGNDTTHYIIDDLEPASNYTFYIVAYMPMGASQMSDHVTQNTLEDVPLRPPEISLTSRSPTDILISWLPIPAKYRRGQVVLYRLSFRLSTENSIQVLELPGTTHEYLLEGLKPDSVYLVRITAATRVGLGESSVWTSHRTPKATSVKAPKSPELHLEPLNCTTISVRWQQDVEDTAAIQGYKLYYKEEGQQENGPIFLDTKDLLYTLSGLDPRRKYHVRLLAYNNIDDGYQADQTVSTPGCVSVRDRMVPPPPPPHHLYAKANTSSSIFLHWRRPAFTAAQIINYTIRCNPVGLQNASLVLYLQTSETHMLVQGLEPNTKYEFAVRLHVDQLSSPWSPVVYHSTLPEAPAGPPVGVKVTLIEDDTALVSWKPPDGPETVVTRYTILYASRKAWIAGEWQVLHREGAITMALLENLVAGNVYIVKISASNEVGEGPFSNSVELAVLPKETSESNQRPKRLDSADAKVYSGYYHLDQKSMTGIAVGVGIALTCILICVLILIYRSKARKSSASKTAQNGTQQLPRTSASLASGNEVGKNLEGAVGNEESLMPMIMPNSFIDAKGGTDLIINSYGPIIKNNSKKKWFFFQDSKKIQVEQPQRRFTPAVCFYQPGTTVLISDEDSPSSPGQTTSFSRPFGVAADTEHSANSEGSHETGDSGRFSHESNDEIHLSSVISTTPPNL.

An N-terminal signal peptide occupies residues 1–35 (MAPPLRPLARLRPPGMLLRALLLLLLLSPLPGVWC). Ig-like domains follow at residues 36 to 130 (FSEL…AHLA), 135 to 222 (SAFE…ASLT), 235 to 322 (PTII…ATLT), and 327 to 411 (PSFV…ARLT). Residues 36 to 949 (FSELSFVKEP…YYHLDQKSMT (914 aa)) lie on the Extracellular side of the membrane. Cystine bridges form between Cys60–Cys113, Cys156–Cys205, Cys256–Cys304, and Cys348–Cys395. An N-linked (GlcNAc...) asparagine glycan is attached at Asn90. 5 consecutive Fibronectin type-III domains span residues 421–515 (APYN…TLED), 517–613 (PLRP…TPKA), 618–717 (APKS…VRDR), 724–817 (PPHH…TLPE), and 822–917 (PPVG…VLPK). Asn488 is a glycosylation site (N-linked (GlcNAc...) asparagine). The N-linked (GlcNAc...) asparagine glycan is linked to Asn630. The helical transmembrane segment at 950-970 (GIAVGVGIALTCILICVLILI) threads the bilayer. Residues 971–1150 (YRSKARKSSA…SVISTTPPNL (180 aa)) lie on the Cytoplasmic side of the membrane. Disordered regions lie at residues 981–1002 (SKTAQNGTQQLPRTSASLASGN) and 1086–1150 (ISDE…PPNL). Polar residues-rich tracts occupy residues 983–1000 (TAQNGTQQLPRTSASLAS) and 1092–1102 (PSSPGQTTSFS). Residues 1110–1138 (DTEHSANSEGSHETGDSGRFSHESNDEIH) show a composition bias toward basic and acidic residues. Polar residues predominate over residues 1141–1150 (SVISTTPPNL).

The protein belongs to the immunoglobulin superfamily. DCC family.

It is found in the membrane. Its function is as follows. May play a role in anteroposterior axis elongation. This chain is Protogenin, found in Homo sapiens (Human).